Reading from the N-terminus, the 114-residue chain is ATP-dependent Clp protease adapter protein ClpS (114 aa).

It belongs to the ClpS family. As to quaternary structure, binds to the N-terminal domain of the chaperone ClpA.

Involved in the modulation of the specificity of the ClpAP-mediated ATP-dependent protein degradation. The chain is ATP-dependent Clp protease adapter protein ClpS from Bdellovibrio bacteriovorus (strain ATCC 15356 / DSM 50701 / NCIMB 9529 / HD100).